Reading from the N-terminus, the 439-residue chain is uncharacterized protein (439 aa).

Gly-28–Thr-35 is a binding site for ATP.

This is an uncharacterized protein from Methanocaldococcus jannaschii (strain ATCC 43067 / DSM 2661 / JAL-1 / JCM 10045 / NBRC 100440) (Methanococcus jannaschii).